A 389-amino-acid chain; its full sequence is Stilbene synthase 3 (389 aa).

55-58 (KFQR) serves as a coordination point for substrate. Residue cysteine 164 is part of the active site. Substrate is bound by residues leucine 267 and 305-307 (GGR).

It belongs to the thiolase-like superfamily. Chalcone/stilbene synthases family. Homodimer.

The protein resides in the cytoplasm. The catalysed reaction is 4-coumaroyl-CoA + 3 malonyl-CoA + 3 H(+) = trans-resveratrol + 4 CO2 + 4 CoA. Its pathway is phytoalexin biosynthesis; 3,4',5-trihydroxystilbene biosynthesis; 3,4',5-trihydroxystilbene from trans-4-coumarate: step 2/2. The protein is Stilbene synthase 3 of Arachis hypogaea (Peanut).